A 464-amino-acid polypeptide reads, in one-letter code: MATVNVNRSVTDIFYRYKMPRLQAKVEGKGNGIKTVLVNMAEVARAIGRPATYPTKYFGCELGAQTLFDHKNERFVVNGSHDVNKLQDLLDGFIRKFVLCPECDNPETNLTVSAKNQTISQSCKACGFHGLLKVNHKVNTFIVKNPPSLNPAAQGSSLTEGKRSRKQKQKNDNADGSMTNNSLANNSGGESDGGNGTNQASQTEAEISAAIPEKTAKDDDDEGWSVDVSKEAIRARLQDLTDGAKGMTISDDYDKTEKERIDIFYELVKDKRDKKQLDDVQTHKELVIEAERLDIINKAPLVLAELLFTENIIKDVQKNRPLLLRFTLNNPKAQRYLIGGVEQTVELHKGILMSKVAGIFKLFYDLDILDEAVILEWAQKVSKRHVSKNIAAEIHEKAMPFVLWLKNAEEESSESEEEEDDESEEDNYVSSAGQRGGQRVVQRGIPRAVAGDEDDEDDVNIDDI.

Position 9 is a phosphoserine (S9). Residue 28–35 coordinates GTP; it reads GKGNGIKT. 2 disordered regions span residues 145-203 and 409-464; these read NPPS…ASQT and EEES…IDDI. The span at 174 to 184 shows a compositional bias: polar residues; sequence ADGSMTNNSLA. The W2 domain occupies 254–415; that stretch reads DKTEKERIDI…KNAEEESSES (162 aa). Composition is skewed to acidic residues over residues 410 to 427 and 451 to 464; these read EESS…EEDN and GDED…IDDI. Phosphoserine is present on residues S412, S413, and S415.

This sequence belongs to the eIF-2-beta/eIF-5 family.

In terms of biological role, catalyzes the hydrolysis of GTP bound to the 40S ribosomal initiation complex (40S.mRNA.Met-tRNA[F].eIF-2.GTP) with the subsequent joining of a 60S ribosomal subunit resulting in the release of eIF-2 and the guanine nucleotide. The subsequent joining of a 60S ribosomal subunit results in the formation of a functional 80S initiation complex (80S.mRNA.Met-tRNA[F]). This chain is Eukaryotic translation initiation factor 5 (eIF5), found in Drosophila melanogaster (Fruit fly).